A 92-amino-acid polypeptide reads, in one-letter code: Small ribosomal subunit protein uS19 (92 aa).

The protein belongs to the universal ribosomal protein uS19 family.

In terms of biological role, protein S19 forms a complex with S13 that binds strongly to the 16S ribosomal RNA. This Francisella philomiragia subsp. philomiragia (strain ATCC 25017 / CCUG 19701 / FSC 153 / O#319-036) protein is Small ribosomal subunit protein uS19.